Reading from the N-terminus, the 542-residue chain is Phosphoacetylglucosamine mutase (542 aa).

M1 is subject to N-acetylmethionine. Position 62 is a phosphothreonine (T62). The active-site Phosphoserine intermediate is the S64. Mg(2+) is bound by residues S64, D276, D278, and D280. S64 carries the phosphoserine modification. Residues 370-372, 496-500, and R505 each bind substrate; these read EAN and RPSGT.

The protein belongs to the phosphohexose mutase family. Mg(2+) serves as cofactor.

The enzyme catalyses N-acetyl-alpha-D-glucosamine 1-phosphate = N-acetyl-D-glucosamine 6-phosphate. It participates in nucleotide-sugar biosynthesis; UDP-N-acetyl-alpha-D-glucosamine biosynthesis; N-acetyl-alpha-D-glucosamine 1-phosphate from alpha-D-glucosamine 6-phosphate (route I): step 2/2. Functionally, catalyzes the conversion of GlcNAc-6-P into GlcNAc-1-P during the synthesis of uridine diphosphate/UDP-GlcNAc, a sugar nucleotide critical to multiple glycosylation pathways including protein N- and O-glycosylation. In Mus musculus (Mouse), this protein is Phosphoacetylglucosamine mutase.